A 629-amino-acid polypeptide reads, in one-letter code: tRNA uridine 5-carboxymethylaminomethyl modification enzyme MnmG (629 aa).

FAD is bound by residues 13 to 18, V125, and S180; that span reads GGGHAG. 273 to 287 contributes to the NAD(+) binding site; the sequence is GPRYCPSIEDKVMRF. Residue Q370 coordinates FAD.

This sequence belongs to the MnmG family. As to quaternary structure, homodimer. Heterotetramer of two MnmE and two MnmG subunits. Requires FAD as cofactor.

It is found in the cytoplasm. In terms of biological role, NAD-binding protein involved in the addition of a carboxymethylaminomethyl (cmnm) group at the wobble position (U34) of certain tRNAs, forming tRNA-cmnm(5)s(2)U34. The chain is tRNA uridine 5-carboxymethylaminomethyl modification enzyme MnmG from Cronobacter sakazakii (strain ATCC BAA-894) (Enterobacter sakazakii).